Reading from the N-terminus, the 122-residue chain is Basic phospholipase A2 LmTX-I (122 aa).

Intrachain disulfides connect cysteine 26–cysteine 115, cysteine 28–cysteine 44, cysteine 43–cysteine 95, cysteine 49–cysteine 122, cysteine 50–cysteine 88, and cysteine 75–cysteine 86. Positions 27, 29, and 31 each coordinate Ca(2+). The active site involves histidine 47. Aspartate 48 serves as a coordination point for Ca(2+). Residue aspartate 89 is part of the active site.

In terms of assembly, monomer. Ca(2+) is required as a cofactor. As to expression, expressed by the venom gland.

It localises to the secreted. It catalyses the reaction a 1,2-diacyl-sn-glycero-3-phosphocholine + H2O = a 1-acyl-sn-glycero-3-phosphocholine + a fatty acid + H(+). With respect to regulation, inhibited by Mn(2+), Mg(2+), Zn(2+) and Cu(2+). Functionally, snake venom phospholipase A2 (PLA2) that displays neurotoxic and myotoxic activities. Induces inflammatory edema by mechanisms involving mast cell activation and arachidonic acid metabolites. Increases plasma creatine kinase activity. PLA2 catalyzes the calcium-dependent hydrolysis of the 2-acyl groups in 3-sn-phosphoglycerides. The protein is Basic phospholipase A2 LmTX-I of Lachesis muta muta (Bushmaster).